A 498-amino-acid chain; its full sequence is Putative antiporter subunit mnhD2 (498 aa).

14 helical membrane passes run 2 to 22 (LSNLLILPMLLPFLCALILVF), 32 to 52 (YLYLGTMTITTIISLMLLIYV), 78 to 98 (LSLIMVTTASFVITLIMAYGF), 108 to 128 (YHLPSFILFLSVGVIGSFLTS), 130 to 150 (LFNLYVMFEIMLLASFVLITL), 161 to 181 (IIYVVLNIIGSWLFLLGIGLL), 209 to 229 (ISLIFLVAFSAKAALVLFMWL), 240 to 260 (LAALFAALMTKVGAYALIRFF), 271 to 291 (IHPLLATMAAITMVIGAIGVI), 308 to 328 (IGFIILGLGTNTFAGINGAIF), 330 to 350 (LVNDIVVKTLLFFIIGSLVYI), 369 to 389 (FGVAFIIMIFAIGGVPPFSGF), 406 to 426 (IGLALMIITSLIAMYSLFRIF), and 451 to 471 (ILSILVVVVIAIGIAAPVVLN).

Belongs to the CPA3 antiporters (TC 2.A.63) subunit D family. In terms of assembly, may form a heterooligomeric complex that consists of seven subunits: mnhA2, mnhB2, mnhC2, mnhD2, mnhE2, mnhF2 and mnhG2.

It is found in the cell membrane. The chain is Putative antiporter subunit mnhD2 (mnhD2) from Staphylococcus aureus (strain Mu3 / ATCC 700698).